We begin with the raw amino-acid sequence, 376 residues long: RCC1 domain-containing protein 1 (376 aa).

Positions 1-169 (MAEERPGAWF…ARQLELGAEH (169 aa)) are interaction with KDM8. Residues 6-56 (PGAWFGFGFCGFGQELGSGRGRQVHSPSPLRAGVDICRVSASWSYTAFVTR) form an RCC1 1 repeat. Arginine 141 carries the post-translational modification (3R)-3-hydroxyarginine. RCC1 repeat units lie at residues 176 to 227 (AGQV…CVSE), 229 to 317 (GDIY…VVTR), and 318 to 371 (TGEL…VYAV).

In terms of assembly, found in a complex with KDM8. Interacts (via N-terminus) with KDM8 (via N-terminus). Post-translationally, specifically hydroxylated (with R stereochemistry) at C-3 of ARG-141 by KDM8.

It is found in the chromosome. In terms of biological role, plays a role in transcriptional repression of satellite repeats, possibly by regulating H3K36 methylation levels in centromeric regions together with KDM8. Possibly together with KDM8, is involved in proper mitotic spindle organization and chromosome segregation. Plays a role in regulating alpha-tubulin deacetylation and cytoskeletal microtubule stability, thereby promoting cell migration and TGF-beta-induced epithelial to mesenchymal transition (EMT), potentially through the inhibition of KDM8. The polypeptide is RCC1 domain-containing protein 1 (Homo sapiens (Human)).